The chain runs to 70 residues: DNA-directed RNA polymerase subunit omega (70 aa).

The protein belongs to the RNA polymerase subunit omega family. In terms of assembly, the RNAP catalytic core consists of 2 alpha, 1 beta, 1 beta' and 1 omega subunit. When a sigma factor is associated with the core the holoenzyme is formed, which can initiate transcription.

It carries out the reaction RNA(n) + a ribonucleoside 5'-triphosphate = RNA(n+1) + diphosphate. Its function is as follows. Promotes RNA polymerase assembly. Latches the N- and C-terminal regions of the beta' subunit thereby facilitating its interaction with the beta and alpha subunits. This chain is DNA-directed RNA polymerase subunit omega, found in Bacillus mycoides (strain KBAB4) (Bacillus weihenstephanensis).